A 122-amino-acid chain; its full sequence is Phospholipase A2 crotoxin basic subunit CBd (122 aa).

Intrachain disulfides connect Cys26–Cys115, Cys28–Cys44, Cys43–Cys95, Cys49–Cys122, Cys50–Cys88, Cys57–Cys81, and Cys75–Cys86. Residues Tyr27, Gly29, and Gly31 each coordinate Ca(2+). Residue His47 is part of the active site. Asp48 is a Ca(2+) binding site. Residue Asp89 is part of the active site.

Belongs to the phospholipase A2 family. Group II subfamily. D49 sub-subfamily. As to quaternary structure, heterodimer of one of the acidic (CA1, CA2, CA3 or CA4) and one of the basic (CBa1, CBa2, CBb, CBc or CBd) subunits; non-covalently linked. The acidic subunit is non-toxic, without enzymatic activity and comprises 3 peptides that are cross-linked by 5 disulfide bridges. The basic subunit is toxic, has phospholipase A2 activity and is composed of a single chain. Multiple variants of each subunit give different crotoxin complexes that can be subdivided into 2 classes: (1) those of high toxicity, low PLA2 activity (CBb, CBc and CBd linked with high affinity to any CA) and high stability (K(d)=4.5 nM) and (2) those of moderate toxicity, high PLA2 activity (CBa2 linked with low affinity to any CA) and low stability (K(d)=25 nM). Interacts with crotoxin inhibitor from Crotalus serum (CICS); the interaction leads to dissociation of the CA-CB heterodimer and to inhibition of PLA2 activity of the CB subunit. Interacts with human NBD1 domain of CFTR. Ca(2+) serves as cofactor. As to expression, expressed by the venom gland.

The protein localises to the secreted. It carries out the reaction a 1,2-diacyl-sn-glycero-3-phosphocholine + H2O = a 1-acyl-sn-glycero-3-phosphocholine + a fatty acid + H(+). In terms of biological role, heterodimer CA-CB: Crotoxin is a potent presynaptic neurotoxin that possesses phospholipase A2 (PLA2) activity and exerts a lethal action by blocking neuromuscular transmission. It consists of a non-covalent association of a basic and weakly toxic PLA2 subunit (CBa2, CBb, CBc, or CBd), with a small acidic, non-enzymatic and non-toxic subunit (CA1, CA2, CA3 or CA4). The complex acts by binding to a specific 48-kDa protein (R48) receptor located on presynaptic membranes, forming a transient ternary complex CA-CB-R48, followed by dissociation of the CA-CB complex and release of the CA subunit. At equilibrium, only the CB subunits remain associated with the specific crotoxin receptor. In addition to neurotoxicity, crotoxin has been found to exert myotoxicity, nephrotoxicity, and cardiovascular toxicity. Moreover, anti-inflammatory, immunomodulatory, anti-tumor and analgesic effects of crotoxin have also been reported. Functionally, monomer CBd: The basic subunit of crotoxin is a snake venom phospholipase A2 (PLA2) that exhibits weak neurotoxicity (10-fold less than the heterodimer) and very strong anticoagulant effects by binding to factor Xa (F10) and inhibiting the prothrombinase activity. In addition, it shows the same effects described for the heterodimer and binds the nucleotide-binding domain (NBD1) of CFTR chloride channels and increases the channel current. PLA2 catalyzes the calcium-dependent hydrolysis of the 2-acyl groups in 3-sn-phosphoglycerides. The chain is Phospholipase A2 crotoxin basic subunit CBd from Crotalus durissus terrificus (South American rattlesnake).